A 288-amino-acid polypeptide reads, in one-letter code: Diaminopimelate epimerase (288 aa).

Substrate-binding residues include N14 and N67. C76 functions as the Proton donor in the catalytic mechanism. Substrate-binding positions include 77–78 (GN), N166, N199, and 217–218 (ER). C226 acts as the Proton acceptor in catalysis. 227-228 (GT) provides a ligand contact to substrate.

The protein belongs to the diaminopimelate epimerase family. Homodimer.

Its subcellular location is the cytoplasm. It carries out the reaction (2S,6S)-2,6-diaminopimelate = meso-2,6-diaminopimelate. It participates in amino-acid biosynthesis; L-lysine biosynthesis via DAP pathway; DL-2,6-diaminopimelate from LL-2,6-diaminopimelate: step 1/1. Catalyzes the stereoinversion of LL-2,6-diaminopimelate (L,L-DAP) to meso-diaminopimelate (meso-DAP), a precursor of L-lysine and an essential component of the bacterial peptidoglycan. This Bacillus cereus (strain AH820) protein is Diaminopimelate epimerase.